We begin with the raw amino-acid sequence, 285 residues long: Undecaprenyl-diphosphatase (285 aa).

The next 7 helical transmembrane spans lie at 40 to 60, 92 to 112, 122 to 142, 159 to 179, 197 to 217, 233 to 253, and 259 to 279; these read DELLINAASNAGTLLAMLLYF, LCILVATPFALAGAVIYENFI, SVYAVAASTIVFGALLWWADA, FLIGASQLVAVIIPGTSRSGI, FSMLIGAPILAAVSLYGLLGL, LIVAALAFVSGYASIGLLMAL, and FLPFVLYRFALGIALLATSPI.

It belongs to the UppP family.

The protein resides in the cell inner membrane. It carries out the reaction di-trans,octa-cis-undecaprenyl diphosphate + H2O = di-trans,octa-cis-undecaprenyl phosphate + phosphate + H(+). Functionally, catalyzes the dephosphorylation of undecaprenyl diphosphate (UPP). Confers resistance to bacitracin. This Hyphomonas neptunium (strain ATCC 15444) protein is Undecaprenyl-diphosphatase.